The following is a 94-amino-acid chain: DNA-directed RNA polymerase subunit omega (94 aa).

The protein belongs to the RNA polymerase subunit omega family. Consists of a sigma factor and the RNAP core enzyme which is composed of 2 alpha chains, 1 beta chain, 1 beta' chain and 1 subunit omega.

The catalysed reaction is RNA(n) + a ribonucleoside 5'-triphosphate = RNA(n+1) + diphosphate. In terms of biological role, promotes RNA polymerase assembly. Latches the N- and C-terminal regions of the beta' subunit thereby facilitating its interaction with the beta and alpha subunits. This is DNA-directed RNA polymerase subunit omega from Shewanella violacea (strain JCM 10179 / CIP 106290 / LMG 19151 / DSS12).